The following is a 130-amino-acid chain: Interferon alpha-inducible protein 27-like protein 2 (130 aa).

3 consecutive transmembrane segments (helical) span residues 8–28, 43–63, and 66–86; these read AAVGGALAVGAVPVVLSAMGF, MSAAAIANGGGVSAGSLVATL, and VGAAGLSTSSNILLASVGSVL. A disordered region spans residues 93–130; the sequence is SPSSSLPAEPEAKEDEARENVPQGEPPKPPLKSEKHEE.

Belongs to the IFI6/IFI27 family.

The protein localises to the mitochondrion membrane. Its function is as follows. Plays a role in the apoptotic process and has a pro-apoptotic activity. This chain is Interferon alpha-inducible protein 27-like protein 2, found in Homo sapiens (Human).